Here is a 163-residue protein sequence, read N- to C-terminus: 3-isopropylmalate dehydratase small subunit (163 aa).

The protein belongs to the LeuD family. LeuD type 2 subfamily. Heterodimer of LeuC and LeuD.

The enzyme catalyses (2R,3S)-3-isopropylmalate = (2S)-2-isopropylmalate. It functions in the pathway amino-acid biosynthesis; L-leucine biosynthesis; L-leucine from 3-methyl-2-oxobutanoate: step 2/4. In terms of biological role, catalyzes the isomerization between 2-isopropylmalate and 3-isopropylmalate, via the formation of 2-isopropylmaleate. This Endomicrobium trichonymphae protein is 3-isopropylmalate dehydratase small subunit.